A 510-amino-acid polypeptide reads, in one-letter code: NAD(P)H-quinone oxidoreductase subunit 2 B, chloroplastic (510 aa).

12 helical membrane-spanning segments follow: residues 24 to 44 (LLLF…GLIL), 59 to 79 (WFYF…LFRW), 99 to 119 (IFQF…VEYI), 124 to 144 (MAIT…MFLC), 149 to 169 (LITI…LSGY), 183 to 203 (YLLM…WLYG), 229 to 249 (ISIA…PAPF), 295 to 315 (WHLL…LLAI), 323 to 343 (MLAY…IVGD), 354 to 374 (YMLF…LFGL), 395 to 415 (ALSL…AGFF), and 418 to 438 (LYLF…IGLL).

It belongs to the complex I subunit 2 family. In terms of assembly, NDH is composed of at least 16 different subunits, 5 of which are encoded in the nucleus.

It localises to the plastid. Its subcellular location is the chloroplast thylakoid membrane. It carries out the reaction a plastoquinone + NADH + (n+1) H(+)(in) = a plastoquinol + NAD(+) + n H(+)(out). It catalyses the reaction a plastoquinone + NADPH + (n+1) H(+)(in) = a plastoquinol + NADP(+) + n H(+)(out). Functionally, NDH shuttles electrons from NAD(P)H:plastoquinone, via FMN and iron-sulfur (Fe-S) centers, to quinones in the photosynthetic chain and possibly in a chloroplast respiratory chain. The immediate electron acceptor for the enzyme in this species is believed to be plastoquinone. Couples the redox reaction to proton translocation, and thus conserves the redox energy in a proton gradient. The protein is NAD(P)H-quinone oxidoreductase subunit 2 B, chloroplastic of Agrostis stolonifera (Creeping bentgrass).